A 149-amino-acid chain; its full sequence is Probable conjugal transfer protein TrbE part 1 (149 aa).

This sequence belongs to the TrbE/VirB4 family.

This Sinorhizobium fredii (strain NBRC 101917 / NGR234) protein is Probable conjugal transfer protein TrbE part 1 (trbEA).